Consider the following 197-residue polypeptide: uncharacterized protein (197 aa).

The next 6 helical transmembrane spans lie at 11–31 (AAMV…IPLI), 50–70 (ILAI…AYLG), 79–99 (AIVA…GLFA), 108–128 (AIVA…LGIM), 136–156 (ALKG…FIGL), and 158–178 (TLQI…AFHF).

This sequence belongs to the chromate ion transporter (CHR) (TC 2.A.51) family.

The protein resides in the cell membrane. This is an uncharacterized protein from Bacillus subtilis (strain 168).